We begin with the raw amino-acid sequence, 53 residues long: Conotoxin Vc5.3 (53 aa).

An N-terminal signal peptide occupies residues 1–15 (VILLLLTASAPSVDA). Residues 16–41 (RPKTEDVPLSSFRDNTKSTLQRLLKR) constitute a propeptide that is removed on maturation.

This sequence belongs to the conotoxin T superfamily. In terms of processing, contains 2 disulfide bonds that can be either 'C1-C3, C2-C4' or 'C1-C4, C2-C3', since these disulfide connectivities have been observed for conotoxins with cysteine framework V (for examples, see AC P0DQQ7 and AC P81755). In terms of tissue distribution, expressed by the venom duct.

It localises to the secreted. The polypeptide is Conotoxin Vc5.3 (Conus victoriae (Queen Victoria cone)).